Reading from the N-terminus, the 355-residue chain is Uroporphyrinogen decarboxylase (355 aa).

Residues 27-31, F46, D77, Y154, S209, and H327 contribute to the substrate site; that span reads RQAGR.

The protein belongs to the uroporphyrinogen decarboxylase family. Homodimer.

Its subcellular location is the cytoplasm. The catalysed reaction is uroporphyrinogen III + 4 H(+) = coproporphyrinogen III + 4 CO2. Its pathway is porphyrin-containing compound metabolism; protoporphyrin-IX biosynthesis; coproporphyrinogen-III from 5-aminolevulinate: step 4/4. In terms of biological role, catalyzes the decarboxylation of four acetate groups of uroporphyrinogen-III to yield coproporphyrinogen-III. The sequence is that of Uroporphyrinogen decarboxylase from Nitrosomonas europaea (strain ATCC 19718 / CIP 103999 / KCTC 2705 / NBRC 14298).